The chain runs to 513 residues: Putative thymidine phosphorylase (513 aa).

Belongs to the thymidine/pyrimidine-nucleoside phosphorylase family. Type 2 subfamily.

The enzyme catalyses thymidine + phosphate = 2-deoxy-alpha-D-ribose 1-phosphate + thymine. The sequence is that of Putative thymidine phosphorylase from Rhodopseudomonas palustris (strain BisB18).